The chain runs to 304 residues: Porphobilinogen deaminase (304 aa).

Cys-240 bears the S-(dipyrrolylmethanemethyl)cysteine mark.

Belongs to the HMBS family. Monomer. Requires dipyrromethane as cofactor.

The enzyme catalyses 4 porphobilinogen + H2O = hydroxymethylbilane + 4 NH4(+). It participates in porphyrin-containing compound metabolism; protoporphyrin-IX biosynthesis; coproporphyrinogen-III from 5-aminolevulinate: step 2/4. Functionally, tetrapolymerization of the monopyrrole PBG into the hydroxymethylbilane pre-uroporphyrinogen in several discrete steps. The sequence is that of Porphobilinogen deaminase from Xanthomonas campestris pv. campestris (strain ATCC 33913 / DSM 3586 / NCPPB 528 / LMG 568 / P 25).